The chain runs to 261 residues: Cytochrome c oxidase subunit 3 (261 aa).

Residues 1-15 (MTHQTHACHMVNPSP) are Mitochondrial matrix-facing. The helical transmembrane segment at 16 to 34 (WPLTGALSGLLMTSGLIMW) threads the bilayer. The Mitochondrial intermembrane segment spans residues 35–40 (FHFNST). The helical transmembrane segment at 41-66 (TLLMLGLTTNMLTMYQWWRDVIREST) threads the bilayer. Residues 67–72 (FQGHHT) lie on the Mitochondrial matrix side of the membrane. The chain crosses the membrane as a helical span at residues 73 to 105 (PNVQKGLRYGMILFIISEVLFFTGFFWAFYHSS). The Mitochondrial intermembrane segment spans residues 106–128 (LAPTPELGGCWPPTGIHPLNPLE). The chain crosses the membrane as a helical span at residues 129–152 (VPLLNTSVLLASGVSITWAHHSLM). The Mitochondrial matrix segment spans residues 153-155 (EGN). A helical membrane pass occupies residues 156–183 (RNHMLQALFITIALGVYFTLLQASEYYE). Over 184-190 (APFTISD) the chain is Mitochondrial intermembrane. The chain crosses the membrane as a helical span at residues 191 to 223 (GVYGSTFFVATGFHGLHVIIGSTFLIVCFFRQL). Residues 224–232 (KFHFTSSHH) lie on the Mitochondrial matrix side of the membrane. The chain crosses the membrane as a helical span at residues 233-256 (FGFEAAAWYWHFVDVVWLFLYVSI). The Mitochondrial intermembrane portion of the chain corresponds to 257–261 (YWWGS).

Belongs to the cytochrome c oxidase subunit 3 family. Component of the cytochrome c oxidase (complex IV, CIV), a multisubunit enzyme composed of 14 subunits. The complex is composed of a catalytic core of 3 subunits MT-CO1, MT-CO2 and MT-CO3, encoded in the mitochondrial DNA, and 11 supernumerary subunits COX4I, COX5A, COX5B, COX6A, COX6B, COX6C, COX7A, COX7B, COX7C, COX8 and NDUFA4, which are encoded in the nuclear genome. The complex exists as a monomer or a dimer and forms supercomplexes (SCs) in the inner mitochondrial membrane with NADH-ubiquinone oxidoreductase (complex I, CI) and ubiquinol-cytochrome c oxidoreductase (cytochrome b-c1 complex, complex III, CIII), resulting in different assemblies (supercomplex SCI(1)III(2)IV(1) and megacomplex MCI(2)III(2)IV(2)).

It localises to the mitochondrion inner membrane. It catalyses the reaction 4 Fe(II)-[cytochrome c] + O2 + 8 H(+)(in) = 4 Fe(III)-[cytochrome c] + 2 H2O + 4 H(+)(out). Its function is as follows. Component of the cytochrome c oxidase, the last enzyme in the mitochondrial electron transport chain which drives oxidative phosphorylation. The respiratory chain contains 3 multisubunit complexes succinate dehydrogenase (complex II, CII), ubiquinol-cytochrome c oxidoreductase (cytochrome b-c1 complex, complex III, CIII) and cytochrome c oxidase (complex IV, CIV), that cooperate to transfer electrons derived from NADH and succinate to molecular oxygen, creating an electrochemical gradient over the inner membrane that drives transmembrane transport and the ATP synthase. Cytochrome c oxidase is the component of the respiratory chain that catalyzes the reduction of oxygen to water. Electrons originating from reduced cytochrome c in the intermembrane space (IMS) are transferred via the dinuclear copper A center (CU(A)) of subunit 2 and heme A of subunit 1 to the active site in subunit 1, a binuclear center (BNC) formed by heme A3 and copper B (CU(B)). The BNC reduces molecular oxygen to 2 water molecules using 4 electrons from cytochrome c in the IMS and 4 protons from the mitochondrial matrix. This chain is Cytochrome c oxidase subunit 3 (MT-CO3), found in Gazella saudiya (Saudi gazelle).